Consider the following 314-residue polypeptide: DNA-directed RNA polymerase subunit alpha (314 aa).

The segment at Met-1–Thr-228 is alpha N-terminal domain (alpha-NTD). The alpha C-terminal domain (alpha-CTD) stretch occupies residues Lys-245 to Asp-314.

It belongs to the RNA polymerase alpha chain family. Homodimer. The RNAP catalytic core consists of 2 alpha, 1 beta, 1 beta' and 1 omega subunit. When a sigma factor is associated with the core the holoenzyme is formed, which can initiate transcription.

It carries out the reaction RNA(n) + a ribonucleoside 5'-triphosphate = RNA(n+1) + diphosphate. Its function is as follows. DNA-dependent RNA polymerase catalyzes the transcription of DNA into RNA using the four ribonucleoside triphosphates as substrates. The chain is DNA-directed RNA polymerase subunit alpha from Limosilactobacillus reuteri (strain DSM 20016) (Lactobacillus reuteri).